The following is a 141-amino-acid chain: 4-hydroxybenzoyl-CoA thioesterase (141 aa).

D17 is an active-site residue. Substrate-binding positions include W47, 59–61 (TPI), and K90.

Belongs to the 4-hydroxybenzoyl-CoA thioesterase family. In terms of assembly, homotetramer.

It carries out the reaction 4-hydroxybenzoyl-CoA + H2O = 4-hydroxybenzoate + CoA + H(+). The protein operates within xenobiotic degradation; 4-chlorobenzoate degradation; 4-hydroxybenzoate from 4-chlorobenzoate: step 3/3. With respect to regulation, unaffected by EDTA, Mg(2+), Mn(2+), Fe(2+), Ca(2+), Co(2+) and Zn(2+). Its function is as follows. Hydrolyzes 4-hydroxybenzoate-CoA, and to a lesser extent benzoyl-CoA and 4-chlorobenzoate-CoA. Not active against aliphatic acyl-CoA thioesters, including palmitoyl-CoA, hexanoyl-CoA and acetyl-CoA. This is 4-hydroxybenzoyl-CoA thioesterase from Pseudomonas sp. (strain CBS-3).